The sequence spans 169 residues: Disulfide bond formation protein B 1 (169 aa).

At 1–14 (MSDNTLYLRREKRF) the chain is on the cytoplasmic side. A helical membrane pass occupies residues 15 to 31 (LVLLGIICLALIGGALY). Residues 32–49 (MQIVLGEAPCPLCILQRY) lie on the Periplasmic side of the membrane. Residues cysteine 41 and cysteine 44 are joined by a disulfide bond. Residues 50-64 (ALLFIAIFAFIGAAM) form a helical membrane-spanning segment. At 65–71 (SGRRGVT) the chain is on the cytoplasmic side. Residues 72-89 (VCETLVTLSALGGIAAAG) traverse the membrane as a helical segment. Residues 90 to 144 (RHVWILAHPSDSCGIDVLQPIVDGLPLATLFPTGFQVSGFCTTPYPPVLGLSLAQ) are Periplasmic-facing. A disulfide bridge connects residues cysteine 102 and cysteine 130. Residues 145-163 (WALAAFVLTAVLVPACIIR) traverse the membrane as a helical segment. Over 164–169 (NRRKPY) the chain is Cytoplasmic.

This sequence belongs to the DsbB family.

Its subcellular location is the cell inner membrane. Required for disulfide bond formation in some periplasmic proteins. Acts by oxidizing the DsbA protein. This is Disulfide bond formation protein B 1 from Pseudomonas savastanoi pv. phaseolicola (strain 1448A / Race 6) (Pseudomonas syringae pv. phaseolicola (strain 1448A / Race 6)).